Reading from the N-terminus, the 317-residue chain is Melanocyte-stimulating hormone receptor (317 aa).

Residues 1–37 (MVWQGPQRRLLGSLNGTSPATPHFELAANQTGPRCLE) are Extracellular-facing. Asn15 and Asn29 each carry an N-linked (GlcNAc...) asparagine glycan. A helical membrane pass occupies residues 38–63 (VSIPNGLFLSLGLVSVVENVLVVAAI). The Cytoplasmic segment spans residues 64-72 (AKNRNLHSP). The helical transmembrane segment at 73–93 (MYYFIGCLAVSDLLVSVTNVL) threads the bilayer. Over 94–118 (ETAVMLLVEAGALAAQAAVVQQLDD) the chain is Extracellular. A helical membrane pass occupies residues 119–140 (IIDVLICGSMVSSLCFLGAIAV). Residues 141–163 (DRYLSIFYALRYHSIVTLPRAWR) are Cytoplasmic-facing. Residues 164–183 (AISAIWVASVLSSTLFIAYY) traverse the membrane as a helical segment. The Extracellular portion of the chain corresponds to 184–191 (NHTAVLLC). The chain crosses the membrane as a helical span at residues 192–211 (LVSFFVAMLVLMAVLYVHML). Topologically, residues 212-240 (ARARQHARGIARLRKRQHSVHQGFGLKGA) are cytoplasmic. The helical transmembrane segment at 241 to 266 (ATLTILLGIFFLCWGPFFLHLSLMVL) threads the bilayer. Residues 267–279 (CPQHPICGCVFQN) are Extracellular-facing. A helical membrane pass occupies residues 280 to 300 (FNLFLTLIICNSIIDPFIYAF). The Cytoplasmic segment spans residues 301 to 317 (RSQELRKTLQEVVLCSW). Cys315 carries the S-palmitoyl cysteine lipid modification.

It belongs to the G-protein coupled receptor 1 family. In terms of assembly, interacts with MGRN1, but does not undergo MGRN1-mediated ubiquitination; this interaction competes with GNAS-binding and thus inhibits agonist-induced cAMP production. Interacts with OPN3; the interaction results in a decrease in MC1R-mediated cAMP signaling and ultimately a decrease in melanin production in melanocytes.

The protein localises to the cell membrane. Receptor for MSH (alpha, beta and gamma) and ACTH. The activity of this receptor is mediated by G proteins which activate adenylate cyclase. Mediates melanogenesis, the production of eumelanin (black/brown) and phaeomelanin (red/yellow), via regulation of cAMP signaling in melanocytes. The sequence is that of Melanocyte-stimulating hormone receptor (MC1R) from Canis lupus familiaris (Dog).